Consider the following 738-residue polypeptide: Protostadienol synthase A (738 aa).

The PFTB 1 repeat unit spans residues 132–173 (KQEMCRYLLNVVNEDGGWGLFIQSPSTVFGTVMNYCMLRILG). D463 serves as the catalytic Proton donor. PFTB repeat units lie at residues 490-531 (LQQA…YENV), 567-607 (VSRS…ACMG), and 616-663 (CQRA…AVIG).

The protein belongs to the terpene cyclase/mutase family.

The catalysed reaction is (S)-2,3-epoxysqualene = (17Z)-protosta-17(20),24-dien-3beta-ol. Functionally, protostadienol synthase which cyclizes (3S)-oxidosqualene to (17Z)-protosta-17(20),24-dien-3-beta-ol (protostadienol), the biosynthetic precursor of helvolic acid, a secondary metabolite which promotes virulence. In Neosartorya fischeri (strain ATCC 1020 / DSM 3700 / CBS 544.65 / FGSC A1164 / JCM 1740 / NRRL 181 / WB 181) (Aspergillus fischerianus), this protein is Protostadienol synthase A (pdsA).